A 132-amino-acid polypeptide reads, in one-letter code: Small ribosomal subunit protein uS9 (132 aa).

Belongs to the universal ribosomal protein uS9 family.

The polypeptide is Small ribosomal subunit protein uS9 (rpsI) (Mycoplasma genitalium (strain ATCC 33530 / DSM 19775 / NCTC 10195 / G37) (Mycoplasmoides genitalium)).